The following is a 460-amino-acid chain: Inactive 7-epi-sesquithujene synthase (460 aa).

Aspartate 308 and aspartate 312 together coordinate Mg(2+). Residues aspartate 308 and aspartate 312 each contribute to the substrate site. The DDXXD motif motif lies at 308–312 (DDMFD).

The protein belongs to the terpene synthase family. Monomer. The cofactor is Mg(2+). Requires Mn(2+) as cofactor.

The protein resides in the cytoplasm. Its pathway is secondary metabolite biosynthesis; terpenoid biosynthesis. Functionally, non-functional sesquiterpene synthase due to a frameshift removing part of the catalytic site. The polypeptide is Inactive 7-epi-sesquithujene synthase (Zea mays (Maize)).